A 141-amino-acid chain; its full sequence is ATP synthase F(0) complex subunit C2, mitochondrial (141 aa).

The N-terminal 66 residues, 1–66 (MYACSKFVST…RSFQTSAISR (66 aa)), are a transit peptide targeting the mitochondrion. Residues 82 to 102 (VGVAGSGAGIGTVFGSLIIGY) traverse the membrane as a helical segment. Lys109 carries the N6,N6,N6-trimethyllysine modification. A helical transmembrane segment spans residues 117 to 137 (ILGFALSEAMGLFCLMVAFLI).

This sequence belongs to the ATPase C chain family. F-type ATPases have 2 components, CF(1) - the catalytic core - and CF(0) - the membrane proton channel. CF(1) has five subunits: alpha(3), beta(3), gamma(1), delta(1), epsilon(1). CF(0) has three main subunits: a, b and c. Interacts with DNAJC30; interaction is direct. Post-translationally, trimethylated by ATPSCKMT at Lys-109. Methylation is required for proper incorporation of the C subunit into the ATP synthase complex and mitochondrial respiration.

The protein localises to the mitochondrion membrane. Functionally, mitochondrial membrane ATP synthase (F(1)F(0) ATP synthase or Complex V) produces ATP from ADP in the presence of a proton gradient across the membrane which is generated by electron transport complexes of the respiratory chain. F-type ATPases consist of two structural domains, F(1) - containing the extramembraneous catalytic core and F(0) - containing the membrane proton channel, linked together by a central stalk and a peripheral stalk. During catalysis, ATP synthesis in the catalytic domain of F(1) is coupled via a rotary mechanism of the central stalk subunits to proton translocation. Part of the complex F(0) domain. A homomeric c-ring of probably 10 subunits is part of the complex rotary element. This chain is ATP synthase F(0) complex subunit C2, mitochondrial, found in Rattus norvegicus (Rat).